The following is a 118-amino-acid chain: Large ribosomal subunit protein uL18 (118 aa).

Belongs to the universal ribosomal protein uL18 family. As to quaternary structure, part of the 50S ribosomal subunit; part of the 5S rRNA/L5/L18/L25 subcomplex. Contacts the 5S and 23S rRNAs.

This is one of the proteins that bind and probably mediate the attachment of the 5S RNA into the large ribosomal subunit, where it forms part of the central protuberance. The polypeptide is Large ribosomal subunit protein uL18 (Sulfurimonas denitrificans (strain ATCC 33889 / DSM 1251) (Thiomicrospira denitrificans (strain ATCC 33889 / DSM 1251))).